Reading from the N-terminus, the 209-residue chain is Nucleoside triphosphate pyrophosphatase (209 aa).

The active-site Proton acceptor is the Asp-79.

The protein belongs to the Maf family. A divalent metal cation serves as cofactor.

It localises to the cytoplasm. The catalysed reaction is a ribonucleoside 5'-triphosphate + H2O = a ribonucleoside 5'-phosphate + diphosphate + H(+). It carries out the reaction a 2'-deoxyribonucleoside 5'-triphosphate + H2O = a 2'-deoxyribonucleoside 5'-phosphate + diphosphate + H(+). Its function is as follows. Nucleoside triphosphate pyrophosphatase. May have a dual role in cell division arrest and in preventing the incorporation of modified nucleotides into cellular nucleic acids. This Mycolicibacterium vanbaalenii (strain DSM 7251 / JCM 13017 / BCRC 16820 / KCTC 9966 / NRRL B-24157 / PYR-1) (Mycobacterium vanbaalenii) protein is Nucleoside triphosphate pyrophosphatase.